The sequence spans 271 residues: MNSPLAPVGVFDSGVGGLTVARAIIDQLPDEDIVYVGDTGNGPYGPLTIPEIRAHALAIGDDLVGRGVKALVIACNSASSACLRDARERYQVPVVEVILPAVRRAVAATRNGRIGVIGTRATITSHAYQDAFAAARDTEITAVACPRFVDFVERGVTSGRQVLGLAQGYLEPLQRAEVDTLVLGCTHYPLLSGLIQLAMGENVTLVSSAEETAKEVVRVLTEIDLLRPHDAPPATRIFEATGDPEAFTKLAARFLGPVLGGVQPVHPSRIH.

Substrate is bound by residues 12–13 (DS) and 44–45 (YG). C75 acts as the Proton donor/acceptor in catalysis. 76–77 (NS) contributes to the substrate binding site. C185 acts as the Proton donor/acceptor in catalysis. 186–187 (TH) is a binding site for substrate.

Belongs to the aspartate/glutamate racemases family.

The enzyme catalyses L-glutamate = D-glutamate. The protein operates within cell wall biogenesis; peptidoglycan biosynthesis. Provides the (R)-glutamate required for cell wall biosynthesis. The protein is Glutamate racemase of Mycobacterium bovis (strain ATCC BAA-935 / AF2122/97).